A 399-amino-acid chain; its full sequence is Leu/Ile/Val-binding protein homolog 7 (399 aa).

The first 22 residues, 1 to 22 (MEKHLIALSVAALLAGAAPASA), serve as a signal peptide directing secretion.

It belongs to the leucine-binding protein family.

Component of an amino-acid transport system. This Brucella suis biovar 1 (strain 1330) protein is Leu/Ile/Val-binding protein homolog 7.